A 107-amino-acid chain; its full sequence is Iron-binding protein IscA (107 aa).

The Fe cation site is built by Cys35, Cys99, and Cys101.

This sequence belongs to the HesB/IscA family. As to quaternary structure, homodimer; may form tetramers and higher multimers. The cofactor is Fe cation.

Its function is as follows. Is able to transfer iron-sulfur clusters to apo-ferredoxin. Multiple cycles of [2Fe2S] cluster formation and transfer are observed, suggesting that IscA acts catalytically. Recruits intracellular free iron so as to provide iron for the assembly of transient iron-sulfur cluster in IscU in the presence of IscS, L-cysteine and the thioredoxin reductase system TrxA/TrxB. In Klebsiella pneumoniae (strain 342), this protein is Iron-binding protein IscA.